Here is a 246-residue protein sequence, read N- to C-terminus: tRNA (guanine-N(1)-)-methyltransferase (246 aa).

S-adenosyl-L-methionine-binding positions include Gly112 and 131-136 (IGDYVL).

It belongs to the RNA methyltransferase TrmD family. Homodimer.

The protein localises to the cytoplasm. The catalysed reaction is guanosine(37) in tRNA + S-adenosyl-L-methionine = N(1)-methylguanosine(37) in tRNA + S-adenosyl-L-homocysteine + H(+). Specifically methylates guanosine-37 in various tRNAs. The polypeptide is tRNA (guanine-N(1)-)-methyltransferase (Fervidobacterium nodosum (strain ATCC 35602 / DSM 5306 / Rt17-B1)).